Consider the following 359-residue polypeptide: Serine/threonine-protein kinase SAPK7 (359 aa).

The Protein kinase domain occupies 4 to 260 (YELLKDIGAG…IREIRNHPWF (257 aa)). ATP is bound by residues 10-18 (IGAGNFGVA) and lysine 33. Residue aspartate 123 is the Proton acceptor of the active site. The tract at residues 299 to 359 (EEARTPPRSS…VHASGEFQLS (61 aa)) is disordered. Over residues 331 to 343 (EEQEEEEDAEDEY) the composition is skewed to acidic residues.

This sequence belongs to the protein kinase superfamily. Ser/Thr protein kinase family. Post-translationally, may be phosphorylated. As to expression, weakly expressed in roots. Expressed in roots of young seedlings.

Its subcellular location is the cytoplasm. It localises to the nucleus. It carries out the reaction L-seryl-[protein] + ATP = O-phospho-L-seryl-[protein] + ADP + H(+). The catalysed reaction is L-threonyl-[protein] + ATP = O-phospho-L-threonyl-[protein] + ADP + H(+). Activated by hyperosmotic stress. Functionally, may play a role in signal transduction of hyperosmotic response. This Oryza sativa subsp. japonica (Rice) protein is Serine/threonine-protein kinase SAPK7 (SAPK7).